The primary structure comprises 573 residues: 60 kDa heat shock protein, mitochondrial (573 aa).

The transit peptide at 1–26 (MLRLPTVFRQMRPVSRVLAPHLTRAY) directs the protein to the mitochondrion. Lys31 carries the post-translational modification N6-succinyllysine. Ser67 and Ser70 each carry phosphoserine. Lys75 is an ATP binding site. Lys75 is subject to N6-acetyllysine. An N6-acetyllysine; alternate modification is found at Lys82. An N6-succinyllysine; alternate modification is found at Lys82. Lys87 is modified (N6-acetyllysine). At Tyr90 the chain carries Phosphotyrosine. Lys91 is modified (N6-acetyllysine). Position 111-115 (111-115 (DGTTT)) interacts with ATP. N6-acetyllysine; alternate is present on Lys125. Position 125 is an N6-succinyllysine; alternate (Lys125). Lys130 is subject to N6-acetyllysine. Lys133 is modified (N6-acetyllysine; alternate). The residue at position 133 (Lys133) is an N6-succinyllysine; alternate. At Lys133 the chain carries N6-malonyllysine; alternate. Residue Lys156 is modified to N6-acetyllysine. Residues Lys191, Lys202, Lys205, Lys218, and Lys236 each carry the N6-acetyllysine; alternate modification. Residues Lys191, Lys202, Lys205, Lys218, and Lys236 each carry the N6-succinyllysine; alternate modification. Lys249 carries the N6-acetyllysine modification. N6-acetyllysine; alternate is present on Lys250. Lys250 is modified (N6-succinyllysine; alternate). 2 positions are modified to N6-acetyllysine: Lys269 and Lys292. Lys301 bears the N6-succinyllysine mark. Lys314 carries the post-translational modification N6-acetyllysine. Lys352 bears the N6-acetyllysine; alternate mark. Lys352 carries the post-translational modification N6-succinyllysine; alternate. Position 389 is an N6-acetyllysine (Lys389). Residue Lys396 is modified to N6-acetyllysine; alternate. Lys396 carries the post-translational modification N6-succinyllysine; alternate. Position 410 is a phosphoserine (Ser410). Gly440 is an ATP binding site. Residue Lys469 is modified to N6-acetyllysine. Lys481 carries the post-translational modification N6-acetyllysine; alternate. Lys481 is modified (N6-succinyllysine; alternate). Ser488 is modified (phosphoserine). An ATP-binding site is contributed by Asp520. Lys551 participates in a covalent cross-link: Glycyl lysine isopeptide (Lys-Gly) (interchain with G-Cter in SUMO2).

The protein belongs to the chaperonin (HSP60) family. In terms of assembly, homoheptamer arranged in a ring structure. The functional units of these chaperonins consist of heptameric rings of the large subunit Hsp60, which function as a back-to-back double ring. Interacts with 2 heptameric Hsp10 rings to form the symmetrical football complex. Interacts with HRAS. Interacts with ATAD3A. Interacts with ETFBKMT and EEF1AKMT3. Interacts with MFHAS1.

The protein localises to the mitochondrion matrix. It catalyses the reaction ATP + H2O + a folded polypeptide = ADP + phosphate + an unfolded polypeptide.. Functionally, chaperonin implicated in mitochondrial protein import and macromolecular assembly. Together with Hsp10, facilitates the correct folding of imported proteins. May also prevent misfolding and promote the refolding and proper assembly of unfolded polypeptides generated under stress conditions in the mitochondrial matrix. The functional units of these chaperonins consist of heptameric rings of the large subunit Hsp60, which function as a back-to-back double ring. In a cyclic reaction, Hsp60 ring complexes bind one unfolded substrate protein per ring, followed by the binding of ATP and association with 2 heptameric rings of the co-chaperonin Hsp10. This leads to sequestration of the substrate protein in the inner cavity of Hsp60 where, for a certain period of time, it can fold undisturbed by other cell components. Synchronous hydrolysis of ATP in all Hsp60 subunits results in the dissociation of the chaperonin rings and the release of ADP and the folded substrate protein. This Pongo abelii (Sumatran orangutan) protein is 60 kDa heat shock protein, mitochondrial (HSPD1).